The sequence spans 307 residues: Pantothenate kinase (307 aa).

90–97 (GSVAVGKS) contributes to the ATP binding site.

It belongs to the prokaryotic pantothenate kinase family.

It is found in the cytoplasm. The enzyme catalyses (R)-pantothenate + ATP = (R)-4'-phosphopantothenate + ADP + H(+). It functions in the pathway cofactor biosynthesis; coenzyme A biosynthesis; CoA from (R)-pantothenate: step 1/5. The chain is Pantothenate kinase from Limosilactobacillus reuteri subsp. reuteri (strain JCM 1112) (Lactobacillus reuteri).